Consider the following 881-residue polypeptide: DNA mismatch repair protein MutS (881 aa).

Residue 632 to 639 (GPNMGGKS) coordinates ATP.

The protein belongs to the DNA mismatch repair MutS family.

This protein is involved in the repair of mismatches in DNA. It is possible that it carries out the mismatch recognition step. This protein has a weak ATPase activity. This is DNA mismatch repair protein MutS from Chelativorans sp. (strain BNC1).